The primary structure comprises 604 residues: MDVRRRSEKPAYPTKEFAAGEKPLKPHKQQQEQDNSLLIASDALPLPLYLTNGLFFTMFFSVMYYLLSRWREKIRNSTPLHVVTFSELVAIASLIASVIYLLGFFGIGFVQSFVSRDNNDECWDEEDENDEQFLLEEDSRRGPATTLGCTAVPPPPALQIVPMVPPQPSKVAAMSEKPAPLVTPAASEEDEEIIKSVVQGKMPSYSLESKLGDCKRAASIRKEALQRITGKSLEGLPLEGFDYESILGQCCEMPIGYVQIPVGIAGPLLLDGREYSVPMATTEGCLVASTNRGCKAIYASGGATSVLLRDGMTRAPCVRFGTAKRAAELKFFVEDPVKFETLAAVFNQSSRFARLQRIQCAIAGKNLYMRFVCSTGDAMGMNMVSKGVQNVLDYLQNEYPDMDVIGISGNFCSDKKPAAVNWIEGRGKSVVCEAIITEEVVKKVLKTEVAALVELNMLKNLTGSAMAGALGGFNAHASNIVSAVYIATGQDPAQNIESSHCITMMEAVNDGKDLHVSVTMPSIEVGTVGGGTQLASQSACLNLLGVKGANREVPGSNARLLATIVAGSVLAGELSLMSAISAGQLVKSHMKYNRSTKDVTKASS.

The disordered stretch occupies residues M1–Q31. The next 2 helical transmembrane spans lie at A40–V62 and A90–V110. Residues Q111 to E189 are linker. Residues D190 to S604 form a catalytic region. The active-site Charge relay system is the E283. The N-linked (GlcNAc...) asparagine glycan is linked to N347. The Charge relay system role is filled by K415. An N-linked (GlcNAc...) asparagine glycan is attached at N460. The active-site Charge relay system is the D491. H589 acts as the Proton donor in catalysis. The N-linked (GlcNAc...) asparagine glycan is linked to N593.

The protein belongs to the HMG-CoA reductase family. In terms of tissue distribution, found in protoplasts and leaves submitted to stress. Low levels found in apexes, anthers and roots.

It is found in the endoplasmic reticulum membrane. The enzyme catalyses (R)-mevalonate + 2 NADP(+) + CoA = (3S)-3-hydroxy-3-methylglutaryl-CoA + 2 NADPH + 2 H(+). It functions in the pathway metabolic intermediate biosynthesis; (R)-mevalonate biosynthesis; (R)-mevalonate from acetyl-CoA: step 3/3. Its function is as follows. Catalyzes the synthesis of mevalonate, the specific precursor of all isoprenoid compounds present in plants. Possible role in plant defense mechanisms as well as in the cell cycle. The sequence is that of 3-hydroxy-3-methylglutaryl-coenzyme A reductase (HMGR) from Nicotiana sylvestris (Wood tobacco).